The following is a 262-amino-acid chain: MTTPRQSSLEPLSIANWRWQPFLDHACGALQPLELEPYPVAPEFLLQTSQTGSKSKPVQVTTATWACKTNKLRQVRAACVEAGAAASVLNFVVNPSTSYDLPFFGADLVTLPAGHLLALDLQPALKTDAEHTKAVWERLMPIFERWQQRLPGGGPIPEEAKPYFSPGFLWTRIPLGSEGDALIEEAVKPAFRDYLELYLQLVHEAEEVSPERSAELLAGQKRYTSYRAEKDPARGMLTRFHGAEWTEAYIHGVLFDLDKKWM.

Belongs to the HY2 family.

It catalyses the reaction (3Z)-phycoerythrobilin + oxidized 2[4Fe-4S]-[ferredoxin] = 15,16-dihydrobiliverdin + reduced 2[4Fe-4S]-[ferredoxin] + 2 H(+). Functionally, catalyzes the two-electron reduction of the C2 and C3(1) diene system of 15,16-dihydrobiliverdin. In Synechococcus sp. (strain RCC307), this protein is Phycoerythrobilin:ferredoxin oxidoreductase.